The primary structure comprises 448 residues: Deoxyguanosinetriphosphate triphosphohydrolase-like protein (448 aa).

Residues Arg-67 to Gly-260 form the HD domain.

This sequence belongs to the dGTPase family. Type 2 subfamily.

This is Deoxyguanosinetriphosphate triphosphohydrolase-like protein from Aliivibrio fischeri (strain MJ11) (Vibrio fischeri).